Reading from the N-terminus, the 160-residue chain is Ribosomal RNA large subunit methyltransferase H (160 aa).

S-adenosyl-L-methionine-binding positions include Leu76, Gly108, and 127-132 (LGKMTW).

Belongs to the RNA methyltransferase RlmH family. As to quaternary structure, homodimer.

It localises to the cytoplasm. It carries out the reaction pseudouridine(1915) in 23S rRNA + S-adenosyl-L-methionine = N(3)-methylpseudouridine(1915) in 23S rRNA + S-adenosyl-L-homocysteine + H(+). Specifically methylates the pseudouridine at position 1915 (m3Psi1915) in 23S rRNA. The chain is Ribosomal RNA large subunit methyltransferase H from Rhizobium leguminosarum bv. trifolii (strain WSM2304).